Consider the following 386-residue polypeptide: Protein phosphatase methylesterase 1 (386 aa).

The tract at residues 1 to 38 is disordered; it reads MSALEKSMHLGRLPSRPPLPGSGGSQSGAKMRMGPGRK. Position 15 is a phosphoserine (serine 15). Asymmetric dimethylarginine; alternate is present on arginine 16. Arginine 16 carries the post-translational modification Omega-N-methylarginine; alternate. Residue serine 42 is modified to Phosphoserine. Residues serine 156 and aspartate 181 contribute to the active site. A compositionally biased stretch (acidic residues) spans 254–265; it reads IIEEEEEDEEGS. Residues 254–280 are disordered; sequence IIEEEEEDEEGSESISKRKKEDDMETK. A compositionally biased stretch (basic and acidic residues) spans 268–280; the sequence is ISKRKKEDDMETK. The active site involves histidine 349.

This sequence belongs to the AB hydrolase superfamily. In terms of assembly, binds PPP2CA and PPP2CB. Phosphorylated by SIK1 following increases in intracellular sodium, leading to dissociation from the protein phosphatase 2A (PP2A) complex and subsequent dephosphorylation of sodium/potassium-transporting ATPase ATP1A1.

It carries out the reaction [phosphatase 2A protein]-C-terminal L-leucine methyl ester + H2O = [phosphatase 2A protein]-C-terminal L-leucine + methanol + H(+). Functionally, demethylates proteins that have been reversibly carboxymethylated. Demethylates PPP2CB (in vitro) and PPP2CA. Binding to PPP2CA displaces the manganese ion and inactivates the enzyme. This is Protein phosphatase methylesterase 1 (PPME1) from Homo sapiens (Human).